We begin with the raw amino-acid sequence, 385 residues long: Succinate--CoA ligase [ADP-forming] subunit beta (385 aa).

One can recognise an ATP-grasp domain in the interval 9-244 (KEILRKYGVP…QDEEDPLETR (236 aa)). ATP is bound by residues Lys-46, 53–55 (GRG), Glu-99, Cys-102, and Glu-107. Residues Asn-199 and Asp-213 each coordinate Mg(2+). Residues Asn-264 and 321–323 (GIM) each bind substrate.

This sequence belongs to the succinate/malate CoA ligase beta subunit family. As to quaternary structure, heterotetramer of two alpha and two beta subunits. Requires Mg(2+) as cofactor.

It catalyses the reaction succinate + ATP + CoA = succinyl-CoA + ADP + phosphate. It carries out the reaction GTP + succinate + CoA = succinyl-CoA + GDP + phosphate. It functions in the pathway carbohydrate metabolism; tricarboxylic acid cycle; succinate from succinyl-CoA (ligase route): step 1/1. Succinyl-CoA synthetase functions in the citric acid cycle (TCA), coupling the hydrolysis of succinyl-CoA to the synthesis of either ATP or GTP and thus represents the only step of substrate-level phosphorylation in the TCA. The beta subunit provides nucleotide specificity of the enzyme and binds the substrate succinate, while the binding sites for coenzyme A and phosphate are found in the alpha subunit. The protein is Succinate--CoA ligase [ADP-forming] subunit beta of Rickettsia bellii (strain RML369-C).